Here is a 474-residue protein sequence, read N- to C-terminus: UDP-N-acetylmuramate--L-alanine ligase (474 aa).

Gly112–Thr118 contacts ATP.

This sequence belongs to the MurCDEF family.

The protein resides in the cytoplasm. It carries out the reaction UDP-N-acetyl-alpha-D-muramate + L-alanine + ATP = UDP-N-acetyl-alpha-D-muramoyl-L-alanine + ADP + phosphate + H(+). The protein operates within cell wall biogenesis; peptidoglycan biosynthesis. Functionally, cell wall formation. This is UDP-N-acetylmuramate--L-alanine ligase from Cupriavidus taiwanensis (strain DSM 17343 / BCRC 17206 / CCUG 44338 / CIP 107171 / LMG 19424 / R1) (Ralstonia taiwanensis (strain LMG 19424)).